We begin with the raw amino-acid sequence, 340 residues long: Insulin gene enhancer protein ISL-2B (340 aa).

LIM zinc-binding domains lie at 9–62 (CVGC…CKRD) and 71–125 (CAKC…RADH). A DNA-binding region (homeobox) is located at residues 172–231 (TTRVRTVLNEKQLHTLRTCYNANPRPDALMKEQLVEMTGLSPRVIRVWFQNKRCKDKKRT). Over residues 307–317 (ESGSMGNSSGS) the composition is skewed to low complexity. Residues 307–340 (ESGSMGNSSGSDVTSLSSQLPDTPNSMVPSPMDT) form a disordered region. Polar residues predominate over residues 318 to 340 (DVTSLSSQLPDTPNSMVPSPMDT).

It is found in the nucleus. In terms of biological role, binds to one of the cis-acting domain of the insulin gene enhancer. May be involved in subtype specialization of primary motoneurons. The protein is Insulin gene enhancer protein ISL-2B (isl2b) of Oncorhynchus tshawytscha (Chinook salmon).